Reading from the N-terminus, the 153-residue chain is Flagellar assembly factor FliW (153 aa).

It belongs to the FliW family. As to quaternary structure, interacts with translational regulator CsrA and flagellin(s).

The protein localises to the cytoplasm. In terms of biological role, acts as an anti-CsrA protein, binds CsrA and prevents it from repressing translation of its target genes, one of which is flagellin. Binds to flagellin and participates in the assembly of the flagellum. The sequence is that of Flagellar assembly factor FliW from Leptospira biflexa serovar Patoc (strain Patoc 1 / Ames).